The chain runs to 417 residues: Serine hydroxymethyltransferase (417 aa).

K54 carries the N6-acetyllysine modification. (6S)-5,6,7,8-tetrahydrofolate-binding positions include L121 and 125–127 (GHL). K229 is modified (N6-(pyridoxal phosphate)lysine). N6-acetyllysine occurs at positions 250, 285, and 354. 355 to 357 (SPF) is a binding site for (6S)-5,6,7,8-tetrahydrofolate. Position 375 is an N6-acetyllysine (K375).

The protein belongs to the SHMT family. In terms of assembly, homodimer. Requires pyridoxal 5'-phosphate as cofactor.

Its subcellular location is the cytoplasm. The catalysed reaction is (6R)-5,10-methylene-5,6,7,8-tetrahydrofolate + glycine + H2O = (6S)-5,6,7,8-tetrahydrofolate + L-serine. It participates in one-carbon metabolism; tetrahydrofolate interconversion. The protein operates within amino-acid biosynthesis; glycine biosynthesis; glycine from L-serine: step 1/1. Its function is as follows. Catalyzes the reversible interconversion of serine and glycine with tetrahydrofolate (THF) serving as the one-carbon carrier. This reaction serves as the major source of one-carbon groups required for the biosynthesis of purines, thymidylate, methionine, and other important biomolecules. Also exhibits THF-independent aldolase activity toward beta-hydroxyamino acids, producing glycine and aldehydes, via a retro-aldol mechanism. The sequence is that of Serine hydroxymethyltransferase from Shigella sonnei (strain Ss046).